Reading from the N-terminus, the 333-residue chain is Oxidoreductase AN1596 (333 aa).

Belongs to the NmrA-type oxidoreductase family.

The protein operates within secondary metabolite biosynthesis; terpenoid biosynthesis. In terms of biological role, oxidoreductase; part of the gene cluster that mediates the biosynthesis of the diterpene ent-pimara-8(14),15-diene (PD). Within the cluster, the HMG-CoA reductase AN1593 functions in the mevalonate pathway, which produces isoprenoid precursors. The geranylgeranyl pyrophosphate (GGPP) synthase AN1592 is needed in the formation of GGPP, the precursor for diterpenes. Lastly, the pimaradiene synthase pbcA performs the 2 cyclization steps that convert GGPP to ent-pimara-8(14),15-diene. The putative roles of the remaining cluster enzymes in ent-pimara-8(14),15-diene biosynthesis is unclear. The cytochrome P450 monooxygenase AN1598, the glutathione S-transferase AN1595, the oxidoreductases AN1596 and AN1597 probably function as decorative enzymes. It is possible that in biological conditions the compound is oxidized to ent-pimara-8(14),15-dien-19-oic acid, which is a bioactive diterpene compound predominant in many plant extracts. The polypeptide is Oxidoreductase AN1596 (Emericella nidulans (strain FGSC A4 / ATCC 38163 / CBS 112.46 / NRRL 194 / M139) (Aspergillus nidulans)).